Reading from the N-terminus, the 244-residue chain is Phosphoadenosine 5'-phosphosulfate reductase (244 aa).

Cysteine 239 serves as the catalytic Nucleophile; cysteine thiosulfonate intermediate.

This sequence belongs to the PAPS reductase family. CysH subfamily.

It localises to the cytoplasm. It carries out the reaction [thioredoxin]-disulfide + sulfite + adenosine 3',5'-bisphosphate + 2 H(+) = [thioredoxin]-dithiol + 3'-phosphoadenylyl sulfate. Its pathway is sulfur metabolism; hydrogen sulfide biosynthesis; sulfite from sulfate: step 3/3. Catalyzes the formation of sulfite from phosphoadenosine 5'-phosphosulfate (PAPS) using thioredoxin as an electron donor. The polypeptide is Phosphoadenosine 5'-phosphosulfate reductase (Salmonella dublin (strain CT_02021853)).